Consider the following 216-residue polypeptide: Cytidylate kinase (216 aa).

9–17 (GPAASGKGT) serves as a coordination point for ATP.

This sequence belongs to the cytidylate kinase family. Type 1 subfamily.

The protein localises to the cytoplasm. The enzyme catalyses CMP + ATP = CDP + ADP. It catalyses the reaction dCMP + ATP = dCDP + ADP. The polypeptide is Cytidylate kinase (Caulobacter sp. (strain K31)).